A 199-amino-acid chain; its full sequence is Probable septum site-determining protein MinC (199 aa).

This sequence belongs to the MinC family. In terms of assembly, interacts with MinD and FtsZ.

Cell division inhibitor that blocks the formation of polar Z ring septums. Rapidly oscillates between the poles of the cell to destabilize FtsZ filaments that have formed before they mature into polar Z rings. Prevents FtsZ polymerization. The protein is Probable septum site-determining protein MinC of Persephonella marina (strain DSM 14350 / EX-H1).